The sequence spans 37 residues: Large ribosomal subunit protein bL36 (37 aa).

It belongs to the bacterial ribosomal protein bL36 family.

The sequence is that of Large ribosomal subunit protein bL36 from Mycobacteroides abscessus (strain ATCC 19977 / DSM 44196 / CCUG 20993 / CIP 104536 / JCM 13569 / NCTC 13031 / TMC 1543 / L948) (Mycobacterium abscessus).